Here is a 173-residue protein sequence, read N- to C-terminus: Alpha-crystallin A chain (173 aa).

N-acetylmethionine is present on M1. The tract at residues 1–63 is required for complex formation with BFSP1 and BFSP2; that stretch reads MDIAIQHPWF…RSVLDSGISE (63 aa). A Deamidated glutamine; partial modification is found at Q6. S45 bears the Phosphoserine mark. Q50 bears the Deamidated glutamine; partial mark. A sHSP domain is found at 52–162; the sequence is LFRSVLDSGI…GHSERAIPVS (111 aa). K70 carries the post-translational modification N6-acetyllysine. Q90 bears the Deamidated glutamine; partial mark. K99 bears the N6-acetyllysine mark. H100 contacts Zn(2+). Residue N101 is modified to Deamidated asparagine; partial. The Zn(2+) site is built by E102 and H107. S122 carries the phosphoserine modification. N123 is modified (deamidated asparagine; partial). A disordered region spans residues 144 to 173; that stretch reads PKVTSGMDAGHSERAIPVSREEKPSSAPSS. The span at 153–167 shows a compositional bias: basic and acidic residues; the sequence is GHSERAIPVSREEKP. H154 is a Zn(2+) binding site. S162 carries O-linked (GlcNAc) serine glycosylation.

Belongs to the small heat shock protein (HSP20) family. Heteromer composed of three CRYAA and one CRYAB subunits. Inter-subunit bridging via zinc ions enhances stability, which is crucial as there is no protein turn over in the lens. Can also form homodimers and homotetramers (dimers of dimers) which serve as the building blocks of homooligomers. Within homooligomers, the zinc-binding motif is created from residues of 3 different molecules. His-100 and Glu-102 from one molecule are ligands of the zinc ion, and His-107 and His-154 residues from additional molecules complete the site with tetrahedral coordination geometry. Part of a complex required for lens intermediate filament formation composed of BFSP1, BFSP2 and CRYAA. In terms of processing, acetylation at Lys-70 may increase chaperone activity. Undergoes age-dependent proteolytical cleavage at the C-terminus.

It is found in the cytoplasm. The protein resides in the nucleus. Functionally, contributes to the transparency and refractive index of the lens. Acts as a chaperone, preventing aggregation of various proteins under a wide range of stress conditions. Required for the correct formation of lens intermediate filaments as part of a complex composed of BFSP1, BFSP2 and CRYAA. This Phocoena phocoena (Harbor porpoise) protein is Alpha-crystallin A chain (CRYAA).